A 295-amino-acid polypeptide reads, in one-letter code: Iron-sulfur cluster carrier protein (295 aa).

Residue 38–45 (GKGGVGKS) coordinates ATP.

It belongs to the Mrp/NBP35 ATP-binding proteins family. In terms of assembly, homodimer.

Binds and transfers iron-sulfur (Fe-S) clusters to target apoproteins. Can hydrolyze ATP. The sequence is that of Iron-sulfur cluster carrier protein from Pyrococcus abyssi (strain GE5 / Orsay).